The primary structure comprises 694 residues: Elongation factor G (694 aa).

The 280-residue stretch at Glu-8–Thr-287 folds into the tr-type G domain. GTP contacts are provided by residues Ala-17–Thr-24, Asp-86–His-90, and Asn-140–Asp-143.

It belongs to the TRAFAC class translation factor GTPase superfamily. Classic translation factor GTPase family. EF-G/EF-2 subfamily.

Its subcellular location is the cytoplasm. Catalyzes the GTP-dependent ribosomal translocation step during translation elongation. During this step, the ribosome changes from the pre-translocational (PRE) to the post-translocational (POST) state as the newly formed A-site-bound peptidyl-tRNA and P-site-bound deacylated tRNA move to the P and E sites, respectively. Catalyzes the coordinated movement of the two tRNA molecules, the mRNA and conformational changes in the ribosome. The protein is Elongation factor G of Brucella canis (strain ATCC 23365 / NCTC 10854 / RM-666).